Consider the following 442-residue polypeptide: 3-phosphoshikimate 1-carboxyvinyltransferase (442 aa).

Residues K25, S26, and R30 each contribute to the 3-phosphoshikimate site. Residue K25 coordinates phosphoenolpyruvate. Phosphoenolpyruvate-binding residues include G96 and R124. 3-phosphoshikimate-binding residues include S171, S172, Q173, S203, D325, and K352. Q173 lines the phosphoenolpyruvate pocket. D325 functions as the Proton acceptor in the catalytic mechanism. Positions 356, 400, and 425 each coordinate phosphoenolpyruvate.

It belongs to the EPSP synthase family. Monomer.

Its subcellular location is the cytoplasm. The catalysed reaction is 3-phosphoshikimate + phosphoenolpyruvate = 5-O-(1-carboxyvinyl)-3-phosphoshikimate + phosphate. It participates in metabolic intermediate biosynthesis; chorismate biosynthesis; chorismate from D-erythrose 4-phosphate and phosphoenolpyruvate: step 6/7. Its function is as follows. Catalyzes the transfer of the enolpyruvyl moiety of phosphoenolpyruvate (PEP) to the 5-hydroxyl of shikimate-3-phosphate (S3P) to produce enolpyruvyl shikimate-3-phosphate and inorganic phosphate. In Bordetella parapertussis (strain 12822 / ATCC BAA-587 / NCTC 13253), this protein is 3-phosphoshikimate 1-carboxyvinyltransferase.